A 529-amino-acid chain; its full sequence is Nuclear distribution protein PAC1 (529 aa).

Residues 68–89 (RLQHKIIDLEGEVSNLRTVIDS) adopt a coiled-coil conformation. 7 WD repeats span residues 120 to 159 (QSHQ…SLIP), 165 to 218 (AHIR…HIRT), 221 to 261 (GHEH…CIKT), 264 to 318 (GHSD…GLSL), 321 to 395 (GHTH…FRPH), 416 to 455 (GHQS…VNGR), and 496 to 529 (TEED…RLWS).

This sequence belongs to the WD repeat LIS1/nudF family. In terms of assembly, self-associates. Interacts with NDL1 and dynein.

Its subcellular location is the cytoplasm. It is found in the cytoskeleton. The protein resides in the spindle pole. Positively regulates the activity of the minus-end directed microtubule motor protein dynein. Plays a central role in positioning the mitotic spindle at the bud neck during cell division. Targets cytoplasmic dynein to microtubule plus ends, thereby promoting dynein-mediated microtubule sliding along the bud cortex and consequently the movement of the mitotic spindle to the bud neck. The sequence is that of Nuclear distribution protein PAC1 from Debaryomyces hansenii (strain ATCC 36239 / CBS 767 / BCRC 21394 / JCM 1990 / NBRC 0083 / IGC 2968) (Yeast).